The primary structure comprises 224 residues: Peptidyl-prolyl cis-trans isomerase FKBP3 (224 aa).

Ala2 carries the post-translational modification N-acetylalanine. Residue Ser36 is modified to Phosphoserine. Residues 89 to 102 (KLNEDKPKETKSEE) are compositionally biased toward basic and acidic residues. Residues 89–111 (KLNEDKPKETKSEETLDEGPPKY) are disordered. The residue at position 99 (Lys99) is an N6-acetyllysine. A PPIase FKBP-type domain is found at 128–224 (GDVVHCWYTG…TFEVELVDID (97 aa)). A Phosphoserine modification is found at Ser152. An N6-acetyllysine modification is found at Lys170.

The protein belongs to the FKBP-type PPIase family.

The protein resides in the nucleus. The enzyme catalyses [protein]-peptidylproline (omega=180) = [protein]-peptidylproline (omega=0). Its activity is regulated as follows. Inhibited preferentially by rapamycin over FK506. FK506- and rapamycin-binding proteins (FKBPs) constitute a family of receptors for the two immunosuppressants which inhibit T-cell proliferation by arresting two distinct cytoplasmic signal transmission pathways. PPIases accelerate the folding of proteins. The protein is Peptidyl-prolyl cis-trans isomerase FKBP3 (FKBP3) of Homo sapiens (Human).